Here is a 338-residue protein sequence, read N- to C-terminus: Protein FosB (338 aa).

Disordered regions lie at residues 1–54, 79–191, 222–276, and 316–338; these read MFQA…PGSF, MAQS…DQLE, CKIP…PPNL, and GAQR…LLAL. Composition is skewed to polar residues over residues 13–31 and 79–88; these read SRCS…SVDS and MAQSQGQPLA. Ser-27 carries the phosphoserine modification. Positions 113 to 124 are enriched in gly residues; sequence SSGGASGSGGPS. The span at 125–137 shows a compositional bias: low complexity; the sequence is TSGTTSGPGPARP. One can recognise a bZIP domain in the interval 155-218; that stretch reads EEKRRVRRER…ERLEFVLVAH (64 aa). A basic motif region spans residues 157–182; that stretch reads KRRVRRERNKLAAAKCRNRRRELTDR. Residues 183–211 are leucine-zipper; the sequence is LQAETDQLEEEKAELESEIAELQKEKERL. The segment covering 256-265 has biased composition (pro residues); it reads LPPPPPPPLP. Composition is skewed to polar residues over residues 266 to 276 and 318 to 338; these read FQTSQDAPPNL and QRTS…LLAL.

Belongs to the bZIP family. Fos subfamily. Heterodimer; binds to DNA as heterodimer. Component of an AP-1 transcription factor complex; composed of FOS-JUN heterodimers. As part of the AP-1 transcription factor complex, forms heterodimers with JUN, JUNB or JUND, thereby binding to the AP-1 consensus sequence and stimulating transcription. Interacts with the BAF multiprotein chromatin-remodeling complex subunits SMARCB1 and SMARCD1. Interacts with ARID1A and JUN. In terms of assembly, homodimer under oxidizing conditions and monomer under reducing conditions (in vitro). Heterodimer; binds to DNA as heterodimer. Forms heterodimers with JUNB, JUN or JUND; thereby binding to the AP-1 consensus sequence but does not stimulate transcription. Forms heterodimers with JUND under oxidizing conditions. Post-translationally, phosphorylated. In terms of processing, phosphorylated at Ser-27 by CSNK2A1; phosphorylation increases protein stability and transactivation potential. As to expression, expressed in the nucleus accumbens of the striatum (at protein level).

It is found in the nucleus. Functionally, heterodimerizes with proteins of the JUN family to form an AP-1 transcription factor complex, thereby enhancing their DNA binding activity to gene promoters containing an AP-1 consensus sequence 5'-TGA[GC]TCA-3' and enhancing their transcriptional activity. As part of the AP-1 complex, facilitates enhancer selection together with cell-type-specific transcription factors by collaboratively binding to nucleosomal enhancers and recruiting the SWI/SNF (BAF) chromatin remodeling complex to establish accessible chromatin. Together with JUN, plays a role in activation-induced cell death of T cells by binding to the AP-1 promoter site of FASLG/CD95L, and inducing its transcription in response to activation of the TCR/CD3 signaling pathway. Exhibits transactivation activity in vitro. Involved in the display of nurturing behavior towards newborns. May play a role in neurogenesis in the hippocampus and in learning and memory-related tasks by regulating the expression of various genes involved in neurogenesis, depression and epilepsy. Implicated in behavioral responses related to morphine reward and spatial memory. In terms of biological role, exhibits lower transactivation activity than isoform 1 in vitro. The heterodimer with JUN does not display any transcriptional activity, and may thereby act as an transcriptional inhibitor. May be involved in the regulation of neurogenesis in the hippocampus. May play a role in synaptic modifications in nucleus accumbens medium spiny neurons and thereby play a role in adaptive and pathological reward-dependent learning, including maladaptive responses involved in drug addiction. Seems to be more stably expressed with a half-life of ~9.5 hours in cell culture as compared to 1.5 hours half-life of isoform 1. The polypeptide is Protein FosB (FOSB) (Homo sapiens (Human)).